We begin with the raw amino-acid sequence, 315 residues long: Zinc finger CCCH domain-containing protein 23 (315 aa).

Residues 1–21 (MMIGENKNRPHPTIHIPQWDQ) are disordered. C3H1-type zinc fingers lie at residues 131-157 (YSGTACPEFRKGSCRRGDSCEFSHGVF) and 165-189 (RYRTQPCKDGTSCRRRICFFAHTTE).

This Arabidopsis thaliana (Mouse-ear cress) protein is Zinc finger CCCH domain-containing protein 23.